The sequence spans 270 residues: NAD kinase (270 aa).

Catalysis depends on Asp45, which acts as the Proton acceptor. NAD(+) contacts are provided by residues 45-46, 121-122, Arg147, Asp149, 160-165, and Ala184; these read DG, NE, and TAYNKS.

Belongs to the NAD kinase family. A divalent metal cation is required as a cofactor.

It localises to the cytoplasm. The enzyme catalyses NAD(+) + ATP = ADP + NADP(+) + H(+). Functionally, involved in the regulation of the intracellular balance of NAD and NADP, and is a key enzyme in the biosynthesis of NADP. Catalyzes specifically the phosphorylation on 2'-hydroxyl of the adenosine moiety of NAD to yield NADP. This is NAD kinase from Limosilactobacillus reuteri subsp. reuteri (strain JCM 1112) (Lactobacillus reuteri).